A 213-amino-acid chain; its full sequence is Uridine kinase (213 aa).

Residue 15–22 (GASASGKS) coordinates ATP.

The protein belongs to the uridine kinase family.

Its subcellular location is the cytoplasm. The enzyme catalyses uridine + ATP = UMP + ADP + H(+). The catalysed reaction is cytidine + ATP = CMP + ADP + H(+). It functions in the pathway pyrimidine metabolism; CTP biosynthesis via salvage pathway; CTP from cytidine: step 1/3. The protein operates within pyrimidine metabolism; UMP biosynthesis via salvage pathway; UMP from uridine: step 1/1. This Salmonella newport (strain SL254) protein is Uridine kinase.